The following is a 154-amino-acid chain: D-aminoacyl-tRNA deacylase (154 aa).

A Gly-cisPro motif, important for rejection of L-amino acids motif is present at residues 138-139 (GP).

This sequence belongs to the DTD family. Homodimer.

The protein localises to the cytoplasm. It carries out the reaction glycyl-tRNA(Ala) + H2O = tRNA(Ala) + glycine + H(+). The catalysed reaction is a D-aminoacyl-tRNA + H2O = a tRNA + a D-alpha-amino acid + H(+). Its function is as follows. An aminoacyl-tRNA editing enzyme that deacylates mischarged D-aminoacyl-tRNAs. Also deacylates mischarged glycyl-tRNA(Ala), protecting cells against glycine mischarging by AlaRS. Acts via tRNA-based rather than protein-based catalysis; rejects L-amino acids rather than detecting D-amino acids in the active site. By recycling D-aminoacyl-tRNA to D-amino acids and free tRNA molecules, this enzyme counteracts the toxicity associated with the formation of D-aminoacyl-tRNA entities in vivo and helps enforce protein L-homochirality. This is D-aminoacyl-tRNA deacylase from Halorhodospira halophila (strain DSM 244 / SL1) (Ectothiorhodospira halophila (strain DSM 244 / SL1)).